Here is a 138-residue protein sequence, read N- to C-terminus: Large ribosomal subunit protein uL16 (138 aa).

Belongs to the universal ribosomal protein uL16 family. Part of the 50S ribosomal subunit.

Binds 23S rRNA and is also seen to make contacts with the A and possibly P site tRNAs. This Chlamydia muridarum (strain MoPn / Nigg) protein is Large ribosomal subunit protein uL16.